The following is a 786-amino-acid chain: Endonuclease MutS2 (786 aa).

Position 333–340 (G333–T340) interacts with ATP. Positions E682–T709 are disordered. In terms of domain architecture, Smr spans L711–K786.

Belongs to the DNA mismatch repair MutS family. MutS2 subfamily. In terms of assembly, homodimer. Binds to stalled ribosomes, contacting rRNA.

Functionally, endonuclease that is involved in the suppression of homologous recombination and thus may have a key role in the control of bacterial genetic diversity. Acts as a ribosome collision sensor, splitting the ribosome into its 2 subunits. Detects stalled/collided 70S ribosomes which it binds and splits by an ATP-hydrolysis driven conformational change. Acts upstream of the ribosome quality control system (RQC), a ribosome-associated complex that mediates the extraction of incompletely synthesized nascent chains from stalled ribosomes and their subsequent degradation. Probably generates substrates for RQC. The chain is Endonuclease MutS2 from Lacticaseibacillus casei (strain BL23) (Lactobacillus casei).